We begin with the raw amino-acid sequence, 1884 residues long: Fatty acid synthase subunit alpha (1884 aa).

Residues 91–141 are disordered; that stretch reads TPDPAEPPAAEEPKAETGKESAPAASAAAAAATQPAAAVAPPPQSAGPVES. Positions 111–129 are enriched in low complexity; that stretch reads SAPAASAAAAAATQPAAAV. The Carrier domain maps to 147 to 222; the sequence is VKASLLIHVL…EQFQDTFSGS (76 aa). Ser-182 carries the O-(pantetheine 4'-phosphoryl)serine modification. The tract at residues 583-613 is disordered; it reads TEQTTQDALAIPTGSNTPTEEDELSTASDDD. Polar residues predominate over residues 584–600; that stretch reads EQTTQDALAIPTGSNTP. Acidic residues predominate over residues 601–613; it reads TEEDELSTASDDD. A beta-ketoacyl reductase region spans residues 677–873; that stretch reads DKYVLVTGAG…CGAIIGWTRG (197 aa). One can recognise a Ketosynthase family 3 (KS3) domain in the interval 1120 to 1660; sequence IQEVVIQHDL…QKGAQAVVVH (541 aa). Catalysis depends on for beta-ketoacyl synthase activity residues Cys-1303, His-1545, and His-1586. 3 residues coordinate Mg(2+): Asp-1770, Val-1771, and Glu-1772. Residues 1770–1772, Tyr-1796, Ser-1806, 1815–1825, 1839–1842, and 1869–1871 contribute to the acetyl-CoA site; these read DVE, EATFKALGVSS, RDGN, and ISH. Ser-1870 and His-1871 together coordinate Mg(2+).

The protein belongs to the thiolase-like superfamily. Fungal fatty acid synthetase subunit alpha family. In terms of assembly, fatty acid synthase is composed of alpha and beta subunits.

It carries out the reaction acetyl-CoA + n malonyl-CoA + 2n NADPH + 4n H(+) = a long-chain-acyl-CoA + n CoA + n CO2 + 2n NADP(+).. The catalysed reaction is a fatty acyl-[ACP] + malonyl-[ACP] + H(+) = a 3-oxoacyl-[ACP] + holo-[ACP] + CO2. The enzyme catalyses a (3R)-hydroxyacyl-[ACP] + NADP(+) = a 3-oxoacyl-[ACP] + NADPH + H(+). Fatty acid synthetase catalyzes the formation of long-chain fatty acids from acetyl-CoA, malonyl-CoA and NADPH. The alpha subunit contains domains for: acyl carrier protein, 3-oxoacyl-[acyl-carrier-protein] reductase, and 3-oxoacyl-[acyl-carrier-protein] synthase. This Candida parapsilosis (strain CDC 317 / ATCC MYA-4646) (Yeast) protein is Fatty acid synthase subunit alpha (FAS2).